The primary structure comprises 159 residues: Late embryogenesis abundant protein 50 (159 aa).

2 consecutive SMP domains span residues 30-87 (TTLT…RNQK) and 96-151 (NLGD…YKLN).

It belongs to the LEA type SMP family.

The protein localises to the cytoplasm. Its subcellular location is the nucleus. Functionally, LEA proteins are late embryonic proteins abundant in higher plant seed embryos. The function of those proteins is not known. In Arabidopsis thaliana (Mouse-ear cress), this protein is Late embryogenesis abundant protein 50.